The following is a 71-amino-acid chain: Putative antitoxin VapB14 (71 aa).

Putative antitoxin component of a possible type II toxin-antitoxin (TA) system. The cognate toxin is VapB14. This is Putative antitoxin VapB14 (vapB14) from Mycobacterium tuberculosis (strain ATCC 25618 / H37Rv).